Reading from the N-terminus, the 508-residue chain is Photosystem II CP47 reaction center protein (508 aa).

The next 6 membrane-spanning stretches (helical) occupy residues 21–36, 101–115, 140–156, 203–218, 237–252, and 457–472; these read SVHI…WAGS, IVFS…IWHW, GIHL…FGAF, IAAG…FHLS, VLSS…AFVV, and SFAL…HGAR.

It belongs to the PsbB/PsbC family. PsbB subfamily. In terms of assembly, PSII is composed of 1 copy each of membrane proteins PsbA, PsbB, PsbC, PsbD, PsbE, PsbF, PsbH, PsbI, PsbJ, PsbK, PsbL, PsbM, PsbT, PsbX, PsbY, PsbZ, Psb30/Ycf12, at least 3 peripheral proteins of the oxygen-evolving complex and a large number of cofactors. It forms dimeric complexes. The cofactor is Binds multiple chlorophylls. PSII binds additional chlorophylls, carotenoids and specific lipids..

The protein localises to the plastid. Its subcellular location is the chloroplast thylakoid membrane. One of the components of the core complex of photosystem II (PSII). It binds chlorophyll and helps catalyze the primary light-induced photochemical processes of PSII. PSII is a light-driven water:plastoquinone oxidoreductase, using light energy to abstract electrons from H(2)O, generating O(2) and a proton gradient subsequently used for ATP formation. In Barbarea verna (Land cress), this protein is Photosystem II CP47 reaction center protein.